An 85-amino-acid chain; its full sequence is Insecticidal toxin Vn1 (85 aa).

Residues 1–23 (MFLYRLICLFILICIITVDISTS) form the signal peptide. The cysteines at positions 71 and 84 are disulfide-linked.

In terms of tissue distribution, highly expressed in the venom apparatus, and weakly expressed in residual body.

It is found in the secreted. Endoparasitoid venom toxin that exhibits insecticidal activity against Tenebrio molitor pupae. Impacts genes related to immune response, environmental information processing, metabolism, and response to external stimuli in T.molitor, suggesting its involvement in the intricate parasitoid wasp-host interaction. This is Insecticidal toxin Vn1 from Aphidius gifuensis (Parasitoid wasp).